The following is a 395-amino-acid chain: Yellow-related salivary protein M35 (395 aa).

The N-terminal stretch at 1–18 is a signal peptide; that stretch reads MKLILTVLAFLSLQVALS.

Belongs to the major royal jelly protein family. As to expression, salivary gland (at protein level).

Its subcellular location is the secreted. Probably modulates blood feeding of sand flies on vertebrate species by binding and sequestering different mediators involved in the host response. Functions as a chemoattractant for host neutrophils; likely acts through a G-protein-coupled receptor and effect is dependent on calcium influx and phosphatidylinositol 3-kinases (PI3K) activity. Its function is as follows. (Microbial infection) Probably enhances infection caused by Leishmania species in the host through augmentation of host neutrophil recruitment into the skin. The polypeptide is Yellow-related salivary protein M35 (Phlebotomus duboscqi (Sandfly)).